An 89-amino-acid chain; its full sequence is Small ribosomal subunit protein uS15 (89 aa).

The segment covering 1 to 10 (MPLNTEKKQE) has biased composition (basic and acidic residues). A disordered region spans residues 1–22 (MPLNTEKKQELINSHQTHATDT). Positions 11 to 22 (LINSHQTHATDT) are enriched in polar residues.

This sequence belongs to the universal ribosomal protein uS15 family. Part of the 30S ribosomal subunit. Forms a bridge to the 50S subunit in the 70S ribosome, contacting the 23S rRNA.

In terms of biological role, one of the primary rRNA binding proteins, it binds directly to 16S rRNA where it helps nucleate assembly of the platform of the 30S subunit by binding and bridging several RNA helices of the 16S rRNA. Forms an intersubunit bridge (bridge B4) with the 23S rRNA of the 50S subunit in the ribosome. In Synechococcus sp. (strain RCC307), this protein is Small ribosomal subunit protein uS15.